Reading from the N-terminus, the 254-residue chain is Ribonuclease 3 (254 aa).

The 131-residue stretch at 24–154 (LRRLQETLGV…VIGALFLDSG (131 aa)) folds into the RNase III domain. Mg(2+) is bound at residue Glu-67. Asp-71 is an active-site residue. Residues Asp-140 and Glu-143 each coordinate Mg(2+). Glu-143 is a catalytic residue. A DRBM domain is found at 181–250 (DYKSTLQVLA…ARLAWEQLSG (70 aa)).

It belongs to the ribonuclease III family. As to quaternary structure, homodimer. Mg(2+) serves as cofactor.

The protein localises to the cytoplasm. It catalyses the reaction Endonucleolytic cleavage to 5'-phosphomonoester.. Functionally, digests double-stranded RNA. Involved in the processing of primary rRNA transcript to yield the immediate precursors to the large and small rRNAs (23S and 16S). Processes some mRNAs, and tRNAs when they are encoded in the rRNA operon. Processes pre-crRNA and tracrRNA of type II CRISPR loci if present in the organism. In Treponema pallidum (strain Nichols), this protein is Ribonuclease 3.